A 1094-amino-acid chain; its full sequence is Centrosomal protein of 128 kDa (1094 aa).

Residues 1 to 29 (MAESSSESDHFRCRDRLSPWAARSTHRGT) are disordered. Residues 7-17 (ESDHFRCRDRL) show a composition bias toward basic and acidic residues. Serine 31 is subject to Phosphoserine. The disordered stretch occupies residues 115–140 (DGGTGSELHHFPPTSPLKDYGDPQGI). Coiled coils occupy residues 190 to 827 (SRSD…QESI) and 879 to 959 (EELK…IALE). Phosphoserine is present on residues serine 249, serine 291, and serine 331. The interval 319 to 345 (AEGDRKGLQHQVSQISKQQSNYQDEQG) is disordered. Polar residues predominate over residues 328–342 (HQVSQISKQQSNYQD). Residues 987 to 999 (DSCSSSERTDGRY) are compositionally biased toward basic and acidic residues. A disordered region spans residues 987-1018 (DSCSSSERTDGRYSKYRVRRNSLQHHQDDTKY). Over residues 1000–1009 (SKYRVRRNSL) the composition is skewed to basic residues. A Phosphoserine modification is found at serine 1061. Positions 1067–1094 (VAPDSASNKEDATMNGTSSQPKKEEYGS) are disordered.

The protein localises to the cytoplasm. It is found in the cytoskeleton. Its subcellular location is the microtubule organizing center. The protein resides in the centrosome. It localises to the centriole. The protein localises to the spindle pole. This Homo sapiens (Human) protein is Centrosomal protein of 128 kDa (CEP128).